The primary structure comprises 125 residues: Fluoride-specific ion channel FluC (125 aa).

Transmembrane regions (helical) follow at residues 4-24 (ILLVGAGGALGSVLRYLVGLW), 32-52 (AFPWGTLFVNVTGSFLIGFLA), 68-88 (FLITGVLGGYTTFSAFSLDAI), and 100-120 (LAYIVASVGLSMLAVFAGLAL). Na(+) is bound by residues Gly-75 and Thr-78.

This sequence belongs to the fluoride channel Fluc/FEX (TC 1.A.43) family.

It is found in the cell inner membrane. It carries out the reaction fluoride(in) = fluoride(out). With respect to regulation, na(+) is not transported, but it plays an essential structural role and its presence is essential for fluoride channel function. Its function is as follows. Fluoride-specific ion channel. Important for reducing fluoride concentration in the cell, thus reducing its toxicity. The protein is Fluoride-specific ion channel FluC of Rhizobium meliloti (strain 1021) (Ensifer meliloti).